A 410-amino-acid chain; its full sequence is Platelet-activating factor acetylhydrolase IB subunit alpha (410 aa).

The tract at residues 1–38 (MVLSQRQRDELNRAIADYLRSNGYEEAYSVFKKEAELD) is required for self-association and interaction with PAFAH1B2 and PAFAH1B3. Residues 1 to 66 (MVLSQRQRDE…SVIRLQKKVM (66 aa)) form an interaction with NDE1 region. Residues 1–102 (MVLSQRQRDE…EWIPRPPEKY (102 aa)) are interaction with NDEL1. Residues 7 to 39 (QRDELNRAIADYLRSNGYEEAYSVFKKEAELDM) form the LisH domain. Position 53 is an N6-acetyllysine (Lys53). Positions 56–82 (TSVIRLQKKVMELESKLNEAKEEFTSG) form a coiled coil. Residues 83–410 (GPLGQKRDPK…DQTVKVWECR (328 aa)) form an interaction with dynein and dynactin region. WD repeat units lie at residues 106 to 147 (GHRS…RTLK), 148 to 187 (GHTD…CIRT), 190 to 229 (GHDH…CVKT), 232 to 271 (GHRE…CKAE), 274 to 333 (EHEH…CLMT), 336 to 377 (GHDN…KTLN), and 378 to 410 (AHEH…WECR). Ser109 carries the phosphoserine modification. Positions 367 to 409 (YKNKRCMKTLNAHEHFVTSLDFHKTAPYVVTGSVDQTVKVWEC) are interaction with DCX. The tract at residues 388-410 (FHKTAPYVVTGSVDQTVKVWECR) is interaction with NDEL1.

The protein belongs to the WD repeat LIS1/nudF family. Can self-associate. Component of the cytosolic PAF-AH (I) heterotetrameric enzyme, which is composed of PAFAH1B1 (beta), PAFAH1B2 (alpha2) and PAFAH1B3 (alpha1) subunits. The catalytic activity of the enzyme resides in the alpha1 (PAFAH1B3) and alpha2 (PAFAH1B2) subunits, whereas the beta subunit (PAFAH1B1) has regulatory activity. Trimer formation is not essential for the catalytic activity. Interacts with the catalytic dimer of PAF-AH (I) heterotetrameric enzyme: interacts with PAFAH1B2 homodimer (alpha2/alpha2 homodimer), PAFAH1B3 homodimer (alpha1/alpha1 homodimer) and PAFAH1B2-PAFAH1B3 heterodimer (alpha2/alpha1 heterodimer). Interacts with DCX, dynein, dynactin, IQGAP1, KATNB1, NDE1, NDEL1, NUDC and RSN. Interacts with DISC1, and this interaction is enhanced by NDEL1. Interacts with DAB1 when DAB1 is phosphorylated in response to RELN/reelin signaling. Interacts with INTS13. Interacts with DCDC1.

The protein localises to the cytoplasm. The protein resides in the cytoskeleton. It localises to the microtubule organizing center. Its subcellular location is the centrosome. It is found in the spindle. The protein localises to the nucleus membrane. In terms of biological role, regulatory subunit (beta subunit) of the cytosolic type I platelet-activating factor (PAF) acetylhydrolase (PAF-AH (I)), an enzyme that catalyzes the hydrolyze of the acetyl group at the sn-2 position of PAF and its analogs and participates in PAF inactivation. Regulates the PAF-AH (I) activity in a catalytic dimer composition-dependent manner. Positively regulates the activity of the minus-end directed microtubule motor protein dynein. May enhance dynein-mediated microtubule sliding by targeting dynein to the microtubule plus end. Required for several dynein- and microtubule-dependent processes such as the maintenance of Golgi integrity, the peripheral transport of microtubule fragments and the coupling of the nucleus and centrosome. Required during brain development for the proliferation of neuronal precursors and the migration of newly formed neurons from the ventricular/subventricular zone toward the cortical plate. Neuronal migration involves a process called nucleokinesis, whereby migrating cells extend an anterior process into which the nucleus subsequently translocates. During nucleokinesis dynein at the nuclear surface may translocate the nucleus towards the centrosome by exerting force on centrosomal microtubules. Also required for proper activation of Rho GTPases and actin polymerization at the leading edge of locomoting cerebellar neurons and postmigratory hippocampal neurons in response to calcium influx triggered via NMDA receptors. May also play a role in other forms of cell locomotion including the migration of fibroblasts during wound healing. Required for dynein recruitment to microtubule plus ends and BICD2-bound cargos. May modulate the Reelin pathway through interaction of the PAF-AH (I) catalytic dimer with VLDLR. The polypeptide is Platelet-activating factor acetylhydrolase IB subunit alpha (Macaca fascicularis (Crab-eating macaque)).